A 217-amino-acid polypeptide reads, in one-letter code: Somatotropin (217 aa).

The first 26 residues, 1–26 (MMAAGPRTSLLLAFALLCLPWTQVVG), serve as a signal peptide directing secretion. Zn(2+) is bound at residue His46. Cys79 and Cys190 form a disulfide bridge. Ser132 bears the Phosphoserine mark. Glu199 contributes to the Zn(2+) binding site. An intrachain disulfide couples Cys207 to Cys215.

This sequence belongs to the somatotropin/prolactin family.

The protein resides in the secreted. Its function is as follows. Plays an important role in growth control. Its major role in stimulating body growth is to stimulate the liver and other tissues to secrete IGF1. It stimulates both the differentiation and proliferation of myoblasts. It also stimulates amino acid uptake and protein synthesis in muscle and other tissues. The polypeptide is Somatotropin (GH1) (Bos mutus grunniens (Wild yak)).